Here is a 227-residue protein sequence, read N- to C-terminus: Phosphoglycolate phosphatase (227 aa).

Catalysis depends on D9, which acts as the Nucleophile. Positions 9, 11, and 171 each coordinate Mg(2+).

Belongs to the HAD-like hydrolase superfamily. CbbY/CbbZ/Gph/YieH family. The cofactor is Mg(2+).

It catalyses the reaction 2-phosphoglycolate + H2O = glycolate + phosphate. Its pathway is organic acid metabolism; glycolate biosynthesis; glycolate from 2-phosphoglycolate: step 1/1. Specifically catalyzes the dephosphorylation of 2-phosphoglycolate. Is involved in the dissimilation of the intracellular 2-phosphoglycolate formed during the DNA repair of 3'-phosphoglycolate ends, a major class of DNA lesions induced by oxidative stress. The chain is Phosphoglycolate phosphatase from Mesorhizobium japonicum (strain LMG 29417 / CECT 9101 / MAFF 303099) (Mesorhizobium loti (strain MAFF 303099)).